The sequence spans 885 residues: DNA replication licensing factor REC (885 aa).

The tract at residues 36 to 76 (RVIPAGGNRQPNQGEPGAPDAPSVPPATRQPRGWSRTAGKR) is disordered. Residues 281 to 308 (CSRCQMEIAMRQRGTFQPRPYQCKRSEC) form a C4-type zinc finger. The region spanning 430 to 627 (SFKLLVQSIA…ERDMSLTAHV (198 aa)) is the MCM domain. 473 to 480 (GDPGIGKT) is an ATP binding site. A compositionally biased stretch (polar residues) spans 796–805 (SLKEGSSRQG). The segment at 796-818 (SLKEGSSRQGTRGGGGAGGGAGK) is disordered. Positions 806 to 817 (TRGGGGAGGGAG) are enriched in gly residues.

This sequence belongs to the MCM family.

The protein resides in the nucleus. In terms of biological role, required for meiotic DNA recombination in females. Probably not involved in DNA repair and recombination in somatic cells. The polypeptide is DNA replication licensing factor REC (rec) (Drosophila melanogaster (Fruit fly)).